The sequence spans 163 residues: Secretory-abundant heat soluble protein 53582 (163 aa).

Positions 1-19 are cleaved as a signal peptide; it reads MARLFVAVALFGVVAFAAA. Residues 22–51 are SAHS-c1; sequence EWTGKTWLGSWASTDRAENWEAFVDALGLP. The interval 67-95 is SAHS-c2; that stretch reads YKQGDKYHHEVSIPSKNFKKAIEYTLGTE. Residues 108–157 form an SAHS-c3 region; it reads KYTEDGEKLVADVQIPSKNKQIHDIYEVQGDTLTKTYKVGDVVAKRWFTR.

Belongs to the Secretory-abundant heat soluble protein (SAHS) family.

The protein localises to the secreted. Its function is as follows. Secreted heat soluble protein acting as a molecular shield in water-deficient condition. Tardigrade-specific intrinsically disordered proteins (TDPs) are essential for desiccation tolerance by forming non-crystalline amorphous solids upon desiccation, and this vitrified state mirrors their protective capabilities. This chain is Secretory-abundant heat soluble protein 53582, found in Hypsibius exemplaris (Freshwater tardigrade).